Consider the following 609-residue polypeptide: Glutamine--fructose-6-phosphate aminotransferase [isomerizing] (609 aa).

The Nucleophile; for GATase activity role is filled by Cys-2. The 218-residue stretch at 2-219 (CGIFGYLGSK…SGELAIVGLG (218 aa)) folds into the Glutamine amidotransferase type-2 domain. 2 consecutive SIS domains span residues 280 to 426 (ISEK…SKHT) and 458 to 599 (WAHT…IDCP). Lys-604 (for Fru-6P isomerization activity) is an active-site residue.

As to quaternary structure, homodimer.

Its subcellular location is the cytoplasm. It carries out the reaction D-fructose 6-phosphate + L-glutamine = D-glucosamine 6-phosphate + L-glutamate. Functionally, catalyzes the first step in hexosamine metabolism, converting fructose-6P into glucosamine-6P using glutamine as a nitrogen source. This Chlamydia abortus (strain DSM 27085 / S26/3) (Chlamydophila abortus) protein is Glutamine--fructose-6-phosphate aminotransferase [isomerizing].